A 207-amino-acid polypeptide reads, in one-letter code: MPRVALYNIQGQQVGEVDLDDSVFGGEVNEAVLHDAVVMQLASRRRGTAATRGWADVSGGGRKPWRQKGTGRARAGSIRSPLWRGGAVIFGPQPRDYGYRLPKKVRRLALRSALASKVRDGNIIVLDELKMEKPRTKDMAHILKNLNAENKALVVTATREPNVELSARNLPGVRFLTSDGINVYDLLAHDKLVITKDAVARVQEVLA.

Residues 52 to 77 are disordered; that stretch reads RGWADVSGGGRKPWRQKGTGRARAGS.

Belongs to the universal ribosomal protein uL4 family. As to quaternary structure, part of the 50S ribosomal subunit.

One of the primary rRNA binding proteins, this protein initially binds near the 5'-end of the 23S rRNA. It is important during the early stages of 50S assembly. It makes multiple contacts with different domains of the 23S rRNA in the assembled 50S subunit and ribosome. Its function is as follows. Forms part of the polypeptide exit tunnel. This chain is Large ribosomal subunit protein uL4, found in Moorella thermoacetica (strain ATCC 39073 / JCM 9320).